The primary structure comprises 492 residues: Glutamyl-tRNA(Gln) amidotransferase subunit A (492 aa).

Residues lysine 78 and serine 158 each act as charge relay system in the active site. The active-site Acyl-ester intermediate is the serine 182.

Belongs to the amidase family. GatA subfamily. As to quaternary structure, heterotrimer of A, B and C subunits.

The catalysed reaction is L-glutamyl-tRNA(Gln) + L-glutamine + ATP + H2O = L-glutaminyl-tRNA(Gln) + L-glutamate + ADP + phosphate + H(+). In terms of biological role, allows the formation of correctly charged Gln-tRNA(Gln) through the transamidation of misacylated Glu-tRNA(Gln) in organisms which lack glutaminyl-tRNA synthetase. The reaction takes place in the presence of glutamine and ATP through an activated gamma-phospho-Glu-tRNA(Gln). This Rhodopseudomonas palustris (strain BisA53) protein is Glutamyl-tRNA(Gln) amidotransferase subunit A.